A 136-amino-acid chain; its full sequence is Large-conductance mechanosensitive channel (136 aa).

The next 4 helical transmembrane spans lie at 9-29, 32-52, 54-74, and 79-99; these read AFAS…GAAF, IVSS…LGGV, FSDL…VVIA, and IQTV…LKAI.

Belongs to the MscL family. In terms of assembly, homopentamer.

The protein resides in the cell inner membrane. Its function is as follows. Channel that opens in response to stretch forces in the membrane lipid bilayer. May participate in the regulation of osmotic pressure changes within the cell. This Vibrio cholerae serotype O1 (strain ATCC 39541 / Classical Ogawa 395 / O395) protein is Large-conductance mechanosensitive channel.